We begin with the raw amino-acid sequence, 224 residues long: Virulence transcriptional regulatory protein PhoP (224 aa).

One can recognise a Response regulatory domain in the interval 3 to 117; sequence RVLVVEDNAL…EVMARMQALM (115 aa). At aspartate 52 the chain carries 4-aspartylphosphate. A DNA-binding region (ompR/PhoB-type) is located at residues 125 to 223; sequence SQVINIPPFQ…VRGQGYLFEL (99 aa).

Monomer in the inactive, unphosphorylated state and dimer in the active, phosphorylated state. Phosphorylated by PhoQ.

Its subcellular location is the cytoplasm. Its function is as follows. Member of the two-component regulatory system PhoP/PhoQ which regulates the expression of genes involved in virulence, adaptation to acidic and low Mg(2+) environments and resistance to host defense antimicrobial peptides. Essential for intramacrophage survival of S.typhimurium. In low periplasmic Mg(2+), PhoQ phosphorylates PhoP, resulting in the expression of PhoP-activated genes (PAG) and repression of PhoP-repressed genes (PRG). In high periplasmic Mg(2+), PhoQ dephosphorylates phospho-PhoP, resulting in the repression of PAG and may lead to expression of some PRG. Essential for transcription of spiC inside macrophages by controlling the expression of the two-component regulatory system SsrB/SpiR (SsrA) and Pir at transcriptional and post-transcriptional levels respectively. Promotes expression of the two-component regulatory system PmrA/PmrB via activation of pmrD gene. Is required to attenuate bacterial growth within fibroblast cells and to enhance bacterial resistance to bile in intestinal cells. Negatively regulates prgH, which is required for invasion of epithelial cells. PhoP uses multiple mechanisms to promote transcription and activates promoters for PAG at low (uM range) Mg(2+) concentrations. Involved in acid tolerance. In Salmonella typhimurium (strain SL1344), this protein is Virulence transcriptional regulatory protein PhoP (phoP).